Consider the following 151-residue polypeptide: MARLHSGKRGSSGSTRPLRTEVPEWVSMSAEDIEAKIVEMAKDGKQSAIIGNILRDMYGVPNVKLITGKSVSSIMKEAGFYAEVPEDLFNLMKKAINLRNHLENNPRDTHSTVGLKLIESKIRRLVKYYRGTKVLPAKWRYSPETARLLVE.

Residues 1–20 form a disordered region; the sequence is MARLHSGKRGSSGSTRPLRT.

The protein belongs to the universal ribosomal protein uS15 family. As to quaternary structure, part of the 30S ribosomal subunit.

This is Small ribosomal subunit protein uS15 from Methanococcus maripaludis (strain DSM 14266 / JCM 13030 / NBRC 101832 / S2 / LL).